Reading from the N-terminus, the 672-residue chain is DNA ligase (672 aa).

Residues 35 to 39 (DAQYD), 84 to 85 (SL), and glutamate 115 contribute to the NAD(+) site. The active-site N6-AMP-lysine intermediate is lysine 117. NAD(+) is bound by residues arginine 138, glutamate 178, lysine 294, and lysine 318. 4 residues coordinate Zn(2+): cysteine 412, cysteine 415, cysteine 430, and cysteine 435. Residues 592 to 672 (ATGGPFVGKS…AFLQMLQTNA (81 aa)) enclose the BRCT domain.

The protein belongs to the NAD-dependent DNA ligase family. LigA subfamily. Mg(2+) is required as a cofactor. It depends on Mn(2+) as a cofactor.

It catalyses the reaction NAD(+) + (deoxyribonucleotide)n-3'-hydroxyl + 5'-phospho-(deoxyribonucleotide)m = (deoxyribonucleotide)n+m + AMP + beta-nicotinamide D-nucleotide.. Functionally, DNA ligase that catalyzes the formation of phosphodiester linkages between 5'-phosphoryl and 3'-hydroxyl groups in double-stranded DNA using NAD as a coenzyme and as the energy source for the reaction. It is essential for DNA replication and repair of damaged DNA. The sequence is that of DNA ligase from Myxococcus xanthus (strain DK1622).